Reading from the N-terminus, the 139-residue chain is MLIPRKVKHRKQHHPKRSGVAKGGTRVVFGEYGIQALEPAYVTNRQIESARIAMTRHIRRGGKVWITIFPDRPLTKKPAETRMGSGKGSPEWWVANVKPGRVMFELAGVPEPVAREALRRAMHKLPMKCRFVRREVEVS.

Basic residues predominate over residues 1 to 19 (MLIPRKVKHRKQHHPKRSG). The disordered stretch occupies residues 1 to 22 (MLIPRKVKHRKQHHPKRSGVAK).

Belongs to the universal ribosomal protein uL16 family. Part of the 50S ribosomal subunit.

Functionally, binds 23S rRNA and is also seen to make contacts with the A and possibly P site tRNAs. This Acidothermus cellulolyticus (strain ATCC 43068 / DSM 8971 / 11B) protein is Large ribosomal subunit protein uL16.